The sequence spans 906 residues: Patched domain-containing protein 3 (906 aa).

Residues 1–70 (MISSKVAPGE…LGQEAPPPRR (70 aa)) are disordered. N-linked (GlcNAc...) asparagine glycans are attached at residues N148 and N235. The next 11 membrane-spanning stretches (helical) occupy residues 338 to 358 (TVIP…VVSC), 370 to 390 (VAVF…GLML), 392 to 412 (LGVP…GVGV), 442 to 462 (VAVS…TGIT), 476 to 496 (GTTL…VMAL), 559 to 579 (FIVV…CFQV), 760 to 780 (VMIA…HPVC), 782 to 802 (LWVT…MAFW), 814 to 834 (LVIC…AFVS), 848 to 868 (LYLL…GVCV), and 883 to 903 (IMFL…PVFL). Residues 339 to 496 (VIPLFHLAYI…ITCFGAVMAL (158 aa)) form the SSD domain.

This sequence belongs to the patched family. In terms of tissue distribution, expressed in germ cells of the testis (at protein level).

It localises to the cell projection. It is found in the cilium. The protein localises to the flagellum membrane. The protein resides in the endoplasmic reticulum membrane. Functionally, may play a role in sperm development or sperm function. However, does not appear to have an essential role in spermatogenesis or male fertility. The sequence is that of Patched domain-containing protein 3 (Ptchd3) from Mus musculus (Mouse).